An 819-amino-acid polypeptide reads, in one-letter code: Lon protease (819 aa).

A compositionally biased stretch (polar residues) spans methionine 1 to proline 14. The tract at residues methionine 1 to glutamate 41 is disordered. Positions glutamate 18–proline 38 are enriched in basic and acidic residues. Residues leucine 42 to leucine 239 enclose the Lon N-terminal domain. ATP is bound at residue glycine 392 to threonine 399. Residues lysine 634 to glycine 818 form the Lon proteolytic domain. Active-site residues include serine 724 and lysine 767.

This sequence belongs to the peptidase S16 family. Homohexamer. Organized in a ring with a central cavity.

The protein resides in the cytoplasm. It carries out the reaction Hydrolysis of proteins in presence of ATP.. Functionally, ATP-dependent serine protease that mediates the selective degradation of mutant and abnormal proteins as well as certain short-lived regulatory proteins. Required for cellular homeostasis and for survival from DNA damage and developmental changes induced by stress. Degrades polypeptides processively to yield small peptide fragments that are 5 to 10 amino acids long. Binds to DNA in a double-stranded, site-specific manner. The polypeptide is Lon protease (Chlamydia muridarum (strain MoPn / Nigg)).